Here is a 356-residue protein sequence, read N- to C-terminus: Protein RecA (356 aa).

75-82 serves as a coordination point for ATP; the sequence is GPESSGKT.

The protein belongs to the RecA family.

It is found in the cytoplasm. Functionally, can catalyze the hydrolysis of ATP in the presence of single-stranded DNA, the ATP-dependent uptake of single-stranded DNA by duplex DNA, and the ATP-dependent hybridization of homologous single-stranded DNAs. It interacts with LexA causing its activation and leading to its autocatalytic cleavage. In Burkholderia mallei (strain ATCC 23344), this protein is Protein RecA.